An 879-amino-acid chain; its full sequence is Band 4.1-like protein 1 (879 aa).

Residues Met-1–Glu-64 are disordered. Over residues Glu-17–Ala-35 the composition is skewed to low complexity. Thr-30 is subject to Phosphothreonine. Basic and acidic residues predominate over residues Ser-38 to Thr-50. A Phosphoserine modification is found at Ser-75. Thr-79 bears the Phosphothreonine mark. Residues Ala-97–Ser-378 form the FERM domain. Position 343 is a phosphotyrosine (Tyr-343). 5 positions are modified to phosphoserine: Ser-378, Ser-430, Ser-437, Ser-461, and Ser-466. Positions Ser-428–Glu-501 are disordered. A compositionally biased stretch (basic and acidic residues) spans Glu-444–Glu-501. Thr-475 carries the post-translational modification Phosphothreonine. Residues Lys-483–Ser-541 form a spectrin--actin-binding region. Ser-510 is subject to Phosphoserine. Positions Leu-514–Leu-538 are enriched in basic and acidic residues. Disordered stretches follow at residues Leu-514–Asp-596, Phe-633–Glu-687, and Ser-718–Pro-742. 4 positions are modified to phosphoserine: Ser-540, Ser-541, Ser-544, and Ser-546. A Phosphothreonine modification is found at Thr-550. Positions Thr-550–Glu-577 are enriched in basic and acidic residues. 2 positions are modified to phosphoserine: Ser-564 and Ser-578. Thr-580 carries the post-translational modification Phosphothreonine. Phosphoserine occurs at positions 583, 587, 639, 648, 650, 665, 666, 669, 671, 677, and 684. Residues Asp-635 to Ser-650 are compositionally biased toward basic and acidic residues. Phosphothreonine is present on Thr-685. The segment covering Ser-718 to Val-728 has biased composition (polar residues). Phosphoserine occurs at positions 721, 742, 766, 782, and 868. Residues Cys-744–Ser-879 form a C-terminal (CTD) region.

Interacts with AGAP2. Highest expression in brain, lower in heart and kidney. Within the brain, highest expression in cerebellum.

Its subcellular location is the cytoplasm. The protein resides in the cytoskeleton. Its function is as follows. May function to confer stability and plasticity to neuronal membrane via multiple interactions, including the spectrin-actin-based cytoskeleton, integral membrane channels and membrane-associated guanylate kinases. This is Band 4.1-like protein 1 from Rattus norvegicus (Rat).